Reading from the N-terminus, the 152-residue chain is MEASPKKPEALQRPDIKQQSFAEIYGVPENFLEIEVRSPQTHGIARKMYTDYEIVCRTNIPVFKLKSSVVRRRYSDFECFREILERESTRVSIPSLPGKVFTNRFSDEVIEARREGLEKFLQTVAGHPLLQTGSKVLCAFIQDPQWDKNQWI.

The PX domain occupies 30–147 (NFLEIEVRSP…CAFIQDPQWD (118 aa)). A 1,2-diacyl-sn-glycero-3-phospho-(1D-myo-inositol-3-phosphate) is bound by residues arginine 73, serine 75, lysine 99, arginine 104, and arginine 113.

It belongs to the sorting nexin family.

It is found in the cytoplasm. It localises to the golgi apparatus membrane. The protein resides in the prevacuolar compartment membrane. Its function is as follows. Required for retention of late Golgi membrane proteins. Component of the retrieval machinery that functions by direct interaction with the cytosolic tails of certain TGN membrane proteins during the sorting/budding process at the prevacuolar compartment. Binds phosphatidylinositol 3-phosphate (PtdIns(P3)). This chain is Sorting nexin-3 (SNX3), found in Yarrowia lipolytica (strain CLIB 122 / E 150) (Yeast).